The sequence spans 154 residues: Ribonuclease H (154 aa).

The RNase H type-1 domain occupies 1–142 (MTKHVEIFTD…CDELARTAAE (142 aa)). D10, E48, D70, and D134 together coordinate Mg(2+).

The protein belongs to the RNase H family. Monomer. Mg(2+) serves as cofactor.

It is found in the cytoplasm. It catalyses the reaction Endonucleolytic cleavage to 5'-phosphomonoester.. Endonuclease that specifically degrades the RNA of RNA-DNA hybrids. This is Ribonuclease H from Vibrio campbellii (strain ATCC BAA-1116).